Here is a 216-residue protein sequence, read N- to C-terminus: MGWIRGRRSRHSWEMSEFHNYNLDLKKSDFSTRWQKQRCPVVKSKCRENASPFFFCCFIAVAMGIRFIIMVTIWSAVFLNSLFNQEVQIPLTESYCGPCPKNWICYKNNCYQFFDESKNWYESQASCMSQNASLLKVYSKEDQDLLKLVKSYHWMGLVHIPTNGSWQWEDGSILSPNLLTIIEMQKGDCALYASSFKGYIENCSTPNTYICMQRTV.

Over methionine 1 to serine 51 the chain is Cytoplasmic. A helical; Signal-anchor for type II membrane protein transmembrane segment spans residues proline 52–threonine 72. Residues isoleucine 73–valine 216 are Extracellular-facing. 4 disulfide bridges follow: cysteine 96/cysteine 105, cysteine 99/cysteine 110, cysteine 127/cysteine 211, and cysteine 189/cysteine 203. The region spanning proline 98–glutamine 213 is the C-type lectin domain. N-linked (GlcNAc...) asparagine glycosylation is found at asparagine 131, asparagine 163, and asparagine 202.

As to quaternary structure, homodimer; disulfide-linked. Heterohexamer composed of two subunits of KLRK1 and four subunits of HCST/DAP10. Interacts (via transmembrane domain) with HCST/DAP10 (via transmembrane domain); the interaction is required for KLRK1 NK cell surface and induces NK cell-mediated cytotoxicity. Does not interact with TYROBP. Interacts with CEACAM1; recruits PTPN6 that dephosphorylates VAV1. As to expression, expressed in natural killer (NK) cells, CD8(+) alpha-beta and gamma-delta T-cells. Expressed on essentially all CD56+CD3- NK cells from freshly isolated PBMC. Expressed in interferon-producing killer dendritic cells (IKDCs).

It is found in the cell membrane. In terms of biological role, functions as an activating and costimulatory receptor involved in immunosurveillance upon binding to various cellular stress-inducible ligands displayed at the surface of autologous tumor cells and virus-infected cells. Provides both stimulatory and costimulatory innate immune responses on activated killer (NK) cells, leading to cytotoxic activity. Acts as a costimulatory receptor for T-cell receptor (TCR) in CD8(+) T-cell-mediated adaptive immune responses by amplifying T-cell activation. Stimulates perforin-mediated elimination of ligand-expressing tumor cells. Signaling involves calcium influx, culminating in the expression of TNF-alpha. Participates in NK cell-mediated bone marrow graft rejection. May play a regulatory role in differentiation and survival of NK cells. Binds to ligands belonging to various subfamilies of MHC class I-related glycoproteins including MICA, MICB, RAET1E, RAET1G, RAET1L/ULBP6, ULBP1, ULBP2, ULBP3 (ULBP2&gt;ULBP1&gt;ULBP3) and ULBP4. The chain is NKG2-D type II integral membrane protein (KLRK1) from Homo sapiens (Human).